Reading from the N-terminus, the 135-residue chain is MNRKKSREVAMKLLFEISINKNSISDTIEHYKENNEIENLDFEYIERILRGIDENMEYIDSKIEESSKKWKISRISKINITILRMAAYEIFFEKDIPCKVSANEAVELAKSYAEENSFSFVNGVIGNLINSSEEK.

The protein belongs to the NusB family.

Its function is as follows. Involved in transcription antitermination. Required for transcription of ribosomal RNA (rRNA) genes. Binds specifically to the boxA antiterminator sequence of the ribosomal RNA (rrn) operons. This chain is Transcription antitermination protein NusB, found in Clostridium acetobutylicum (strain ATCC 824 / DSM 792 / JCM 1419 / IAM 19013 / LMG 5710 / NBRC 13948 / NRRL B-527 / VKM B-1787 / 2291 / W).